The chain runs to 132 residues: MKKTGILNSHLAKLADDLGHTDQVCIGDLGLPVPNGIPKIDLSLTSGVPSFQEVLDIYLENILVEKVILAEEIKEANPDQLSRLLAKLDNSVSIEYVSHDHLKQMTQDVKAVIRTGENTPYSNIILQSGVII.

His20 acts as the Proton donor in catalysis. Substrate-binding positions include Asp28, His99, and 121–123 (YSN).

It belongs to the RbsD / FucU family. RbsD subfamily. In terms of assembly, homodecamer.

It is found in the cytoplasm. It catalyses the reaction beta-D-ribopyranose = beta-D-ribofuranose. The protein operates within carbohydrate metabolism; D-ribose degradation; D-ribose 5-phosphate from beta-D-ribopyranose: step 1/2. Functionally, catalyzes the interconversion of beta-pyran and beta-furan forms of D-ribose. The protein is D-ribose pyranase of Streptococcus agalactiae serotype Ia (strain ATCC 27591 / A909 / CDC SS700).